The following is a 261-amino-acid chain: Small ribosomal subunit protein eS4 (261 aa).

Positions 42–100 constitute an S4 RNA-binding domain; the sequence is LPLILILRNRLKYALTYREVVSILMQRHILVDGKIHFCIRLSDVVSIPKTNENFRLLYD.

Belongs to the eukaryotic ribosomal protein eS4 family.

The protein resides in the cytoplasm. This is Small ribosomal subunit protein eS4 (RPS4) from Prunus armeniaca (Apricot).